Here is a 198-residue protein sequence, read N- to C-terminus: MIISAKFITSLVKFDENLSSNFSEVAFLGRSNVGKSSLINSLCKQKNLAKSSATPGKTQLINFFEVICKRNEEKFNINFIDLPGFGYAKVSKNLKEIWNQNLDEFLKLRTSIKLFIHLIDSRHTHLEIDVNLNDYLKRFLRPDQKILKVFTKCDKLNQSEKAKLKNEFKDSILVSNLNKFGLDSLEDIIINQTLGLDK.

One can recognise an EngB-type G domain in the interval 21 to 195; that stretch reads NFSEVAFLGR…EDIIINQTLG (175 aa). GTP-binding positions include 29–36, 56–60, 81–84, 151–154, and 174–176; these read GRSNVGKS, GKTQL, DLPG, TKCD, and VSN. The Mg(2+) site is built by Ser-36 and Thr-58.

This sequence belongs to the TRAFAC class TrmE-Era-EngA-EngB-Septin-like GTPase superfamily. EngB GTPase family. Mg(2+) serves as cofactor.

In terms of biological role, necessary for normal cell division and for the maintenance of normal septation. The protein is Probable GTP-binding protein EngB of Campylobacter jejuni (strain RM1221).